The chain runs to 248 residues: Cutinase (248 aa).

Residues 1 to 17 (MRSLAILTTLLAGHAFA) form the signal peptide. Positions 18-28 (YPKPAPQSVNR) are excised as a propeptide. The segment at 31 to 70 (WPSINEFLSELAKVMPIGDTITAACDLISDGEDAAASLFG) is lid covering the active site of the uncomplexed enzyme. 2 disulfide bridges follow: cysteine 55–cysteine 91 and cysteine 79–cysteine 153. The active-site Nucleophile is serine 164. A disulfide bridge connects residues cysteine 212 and cysteine 219. Aspartate 216 is an active-site residue. The Proton donor/acceptor role is filled by histidine 229.

The protein belongs to the cutinase family.

The protein resides in the secreted. It carries out the reaction cutin + H2O = cutin monomers.. Weakly inhibited by n-undecyl phosphonate (C11Y4). Activity unaffected by paraoxon. Its function is as follows. Catalyzes the hydrolysis of complex carboxylic polyesters found in the cell wall of plants. Degrades cutin, a macromolecule that forms the structure of the plant cuticle. The protein is Cutinase of Hypocrea jecorina (strain QM6a) (Trichoderma reesei).